The following is a 147-amino-acid chain: D-aminoacyl-tRNA deacylase (147 aa).

The Gly-cisPro motif, important for rejection of L-amino acids motif lies at 136-137 (GP).

This sequence belongs to the DTD family. Homodimer.

The protein localises to the cytoplasm. The catalysed reaction is glycyl-tRNA(Ala) + H2O = tRNA(Ala) + glycine + H(+). It carries out the reaction a D-aminoacyl-tRNA + H2O = a tRNA + a D-alpha-amino acid + H(+). An aminoacyl-tRNA editing enzyme that deacylates mischarged D-aminoacyl-tRNAs. Also deacylates mischarged glycyl-tRNA(Ala), protecting cells against glycine mischarging by AlaRS. Acts via tRNA-based rather than protein-based catalysis; rejects L-amino acids rather than detecting D-amino acids in the active site. By recycling D-aminoacyl-tRNA to D-amino acids and free tRNA molecules, this enzyme counteracts the toxicity associated with the formation of D-aminoacyl-tRNA entities in vivo and helps enforce protein L-homochirality. In Sulfurihydrogenibium sp. (strain YO3AOP1), this protein is D-aminoacyl-tRNA deacylase.